We begin with the raw amino-acid sequence, 732 residues long: MGRREEMIAKIKELMTQPERIRNMGIAAHIDHGKTTLSDNLLAGAGMISEELAGKQLVLDFDEQEQARGITINAANVSMVHNYEGNDYLINLIDTPGHVDFGGDVTRAMRAIDGAIIVVDAVEGVMPQTETVLRQALREYVKPVLFINKVDRLIKELKLTPQQMQERFVKVITDVNRLIRRYAPPEFKDKWLVKVEDGSVAFGSAYYNWALSVPYMKKTGVSFKDIIDLTNAGDLKTLRKKAPLHVVVLDMVVKHLPNPLEAQKYRIPHLWRGDINSDVGQAMMNCDPKGPMTMVVTKIILDKHAGEVATGRVWSGTVKTGQEVYLINSKRKARIQQVGIYMGPERINMEAVPAGNIVAVTGLRDAMAGETVSVQQIEPFEALHYTSEPVVTVAIEAKNVKDLPKLVEALRQLAKEDPTLHVKIDEETGQHLLSGMGELHLEVKLHRLKTEWKLDVEVSPPIVVYRESVTKQSPIVEGKSPNKHNRFYITVEPMPDEIYQAIREGEIPEGRPKDPKAVAKKLAELGMDYEIAKGIVDIYNGNMFLDNTKGIQYLNEVMDLLVDGFHQAMDEGPLAKEPVMKVIVRLHDAKIHEDNVHRGPAQIYPAIRSAIHCAMMKAGPVLYEPYQKVIINVPYEYMGAVSRELNQRRGQLIDMRQEGEVMIIIGEAPVAEMFGFAGAIRGATSGKALWTTEHAGFKRVPNELAQQIIRQIRQRKGLDPNPPKEQDVCPQQ.

The tr-type G domain maps to 19-260; the sequence is ERIRNMGIAA…MVVKHLPNPL (242 aa). GTP is bound by residues 28–35, 94–98, and 148–151; these read AHIDHGKT, DTPGH, and NKVD. H597 carries the diphthamide modification.

Belongs to the TRAFAC class translation factor GTPase superfamily. Classic translation factor GTPase family. EF-G/EF-2 subfamily.

It localises to the cytoplasm. Functionally, catalyzes the GTP-dependent ribosomal translocation step during translation elongation. During this step, the ribosome changes from the pre-translocational (PRE) to the post-translocational (POST) state as the newly formed A-site-bound peptidyl-tRNA and P-site-bound deacylated tRNA move to the P and E sites, respectively. Catalyzes the coordinated movement of the two tRNA molecules, the mRNA and conformational changes in the ribosome. This Thermococcus kodakarensis (strain ATCC BAA-918 / JCM 12380 / KOD1) (Pyrococcus kodakaraensis (strain KOD1)) protein is Elongation factor 2.